Reading from the N-terminus, the 79-residue chain is Sec-independent protein translocase protein TatA (79 aa).

A helical membrane pass occupies residues 1 to 21; the sequence is MGGFTSIWHWVIVLLVIVLLF. Positions 48–79 are disordered; it reads EEEAKNEPKTLDAQATQTKAHESSEIKSKQES. The segment covering 66–79 has biased composition (basic and acidic residues); that stretch reads KAHESSEIKSKQES.

It belongs to the TatA/E family. As to quaternary structure, the Tat system comprises two distinct complexes: a TatABC complex, containing multiple copies of TatA, TatB and TatC subunits, and a separate TatA complex, containing only TatA subunits. Substrates initially bind to the TatABC complex, which probably triggers association of the separate TatA complex to form the active translocon.

It is found in the cell inner membrane. Functionally, part of the twin-arginine translocation (Tat) system that transports large folded proteins containing a characteristic twin-arginine motif in their signal peptide across membranes. TatA could form the protein-conducting channel of the Tat system. The polypeptide is Sec-independent protein translocase protein TatA (Helicobacter pylori (strain P12)).